The sequence spans 308 residues: Elongation factor Ts (308 aa).

Residues 80 to 83 (TDFV) form an involved in Mg(2+) ion dislocation from EF-Tu region.

It belongs to the EF-Ts family.

The protein resides in the cytoplasm. Associates with the EF-Tu.GDP complex and induces the exchange of GDP to GTP. It remains bound to the aminoacyl-tRNA.EF-Tu.GTP complex up to the GTP hydrolysis stage on the ribosome. The chain is Elongation factor Ts from Rhizobium johnstonii (strain DSM 114642 / LMG 32736 / 3841) (Rhizobium leguminosarum bv. viciae).